The following is a 470-amino-acid chain: MNPNQKILCTSATALVIGTIAVLIGIVNLGLNIGLHLKPSCNCSRSQPEATNASQTIINNYYNETNITQISNTNIQVEERASREFNNLTKGLCTINSWHIYGKDNAVRIGEDSDVLVTREPYVSCDPDECRFYALSQGTTIRGKHSNGTIHDRSQYRDLISWPLSSPPTVYNSRVECIGWSSTSCHDGRARMSICISGPNNNASAVIWYNRRPVTEINTWARNILRTQESECVCQNGVCPVVFTDGSATGPAETRIYYFKEGKILKWEPLTGTAKHIEECSCYGEQAGVTCTCRDNWQGSNRPVIQIDPVAMTHTSQYICSPVLTDNPRPNDPTVGKCNDPYPGNNNNGVKGFSYLDGGNTWLGRTISIASRSGYEMLKVPNALTDDRSKPTQGQTIVLNTDWSGYSGSFMDYWAEGECYRACFYVELIRGRPKEDKVWWTSNSIVSMCSSTEFLGQWNWPDGAKIEYFL.

At 1–14 (MNPNQKILCTSATA) the chain is on the intravirion side. Positions 11 to 33 (SATALVIGTIAVLIGIVNLGLNI) are involved in apical transport and lipid raft association. A helical transmembrane segment spans residues 15 to 35 (LVIGTIAVLIGIVNLGLNIGL). Residues 36–89 (HLKPSCNCSRSQPEATNASQTIINNYYNETNITQISNTNIQVEERASREFNNLT) are hypervariable stalk region. Over 36-470 (HLKPSCNCSR…PDGAKIEYFL (435 aa)) the chain is Virion surface. N42, N52, N63, N66, and N87 each carry an N-linked (GlcNAc...) asparagine; by host glycan. The tract at residues 92–470 (LCTINSWHIY…PDGAKIEYFL (379 aa)) is head of neuraminidase. Cystine bridges form between C93–C419, C125–C130, C177–C195, C185–C232, C234–C239, C280–C293, C282–C291, C320–C338, and C423–C449. R119 is a substrate binding site. Residue N147 is glycosylated (N-linked (GlcNAc...) asparagine; by host). Catalysis depends on D152, which acts as the Proton donor/acceptor. R153 serves as a coordination point for substrate. A glycan (N-linked (GlcNAc...) asparagine; by host) is linked at N202. Residue N202 is glycosylated (N-linked (GlcNAc...) (high mannose) asparagine; by host). 278–279 (EE) contributes to the substrate binding site. R294 is a binding site for substrate. Ca(2+)-binding residues include D295, G299, D326, and N348. A substrate-binding site is contributed by R372. The Nucleophile role is filled by Y406.

The protein belongs to the glycosyl hydrolase 34 family. Homotetramer. Requires Ca(2+) as cofactor. Post-translationally, N-glycosylated.

It is found in the virion membrane. It localises to the host apical cell membrane. It carries out the reaction Hydrolysis of alpha-(2-&gt;3)-, alpha-(2-&gt;6)-, alpha-(2-&gt;8)- glycosidic linkages of terminal sialic acid residues in oligosaccharides, glycoproteins, glycolipids, colominic acid and synthetic substrates.. Its activity is regulated as follows. Inhibited by the neuraminidase inhibitors zanamivir (Relenza) and oseltamivir (Tamiflu). These drugs interfere with the release of progeny virus from infected cells and are effective against all influenza strains. Resistance to neuraminidase inhibitors is quite rare. Its function is as follows. Catalyzes the removal of terminal sialic acid residues from viral and cellular glycoconjugates. Cleaves off the terminal sialic acids on the glycosylated HA during virus budding to facilitate virus release. Additionally helps virus spread through the circulation by further removing sialic acids from the cell surface. These cleavages prevent self-aggregation and ensure the efficient spread of the progeny virus from cell to cell. Otherwise, infection would be limited to one round of replication. Described as a receptor-destroying enzyme because it cleaves a terminal sialic acid from the cellular receptors. May facilitate viral invasion of the upper airways by cleaving the sialic acid moieties on the mucin of the airway epithelial cells. Likely to plays a role in the budding process through its association with lipid rafts during intracellular transport. May additionally display a raft-association independent effect on budding. Plays a role in the determination of host range restriction on replication and virulence. Sialidase activity in late endosome/lysosome traffic seems to enhance virus replication. The chain is Neuraminidase from Aves (whales).